The chain runs to 349 residues: Macrophage-capping protein (349 aa).

Position 1 is an N-acetylmethionine (Met-1). Gelsolin-like repeat units lie at residues 28–107 (KLKP…DLFM), 147–222 (KNIR…AEMI), and 264–342 (LTKV…PIFK). Positions 138 to 147 (RKLYQVKGKK) match the Nuclear localization signal motif. Ser-338 is subject to Phosphoserine.

The protein belongs to the villin/gelsolin family. As to quaternary structure, interacts with NUP62. Interacts with NUTF2 and RAN; involved in CAPG nuclear import. Phosphorylated.

The protein resides in the nucleus. Its subcellular location is the cytoplasm. It is found in the melanosome. It localises to the cell projection. The protein localises to the lamellipodium. The protein resides in the ruffle. In terms of biological role, calcium-sensitive protein which reversibly blocks the barbed ends of actin filaments but does not sever preformed actin filaments. May play an important role in macrophage function. May play a role in regulating cytoplasmic and/or nuclear structures through potential interactions with actin. May bind DNA. Uncapping occurs either when Ca(2+) falls or when the concentration of polyphosphoinositide rises, both at low and high Ca(2+). In Rattus norvegicus (Rat), this protein is Macrophage-capping protein (Capg).